A 459-amino-acid chain; its full sequence is Chromosomal replication initiator protein DnaA (459 aa).

Residues 1 to 83 (MKNAREIWRN…NKLEIHFIEE (83 aa)) are domain I, interacts with DnaA modulators. The domain II stretch occupies residues 83–121 (ESQAHKYAPADGSSNESIAVTETKEQPVLLPSKEEGDLG). Residues 122 to 338 (QLNDKYIFET…GALTRVVAYA (217 aa)) form a domain III, AAA+ region region. ATP-binding residues include Gly-166, Gly-168, Lys-169, and Thr-170. Residues 339-459 (KLVGRPIDPD…IQTLKKALSN (121 aa)) are domain IV, binds dsDNA.

The protein belongs to the DnaA family. As to quaternary structure, oligomerizes as a right-handed, spiral filament on DNA at oriC.

It localises to the cytoplasm. Its function is as follows. Plays an essential role in the initiation and regulation of chromosomal replication. ATP-DnaA binds to the origin of replication (oriC) to initiate formation of the DNA replication initiation complex once per cell cycle. Binds the DnaA box (a 9 base pair repeat at the origin) and separates the double-stranded (ds)DNA. Forms a right-handed helical filament on oriC DNA; dsDNA binds to the exterior of the filament while single-stranded (ss)DNA is stabiized in the filament's interior. The ATP-DnaA-oriC complex binds and stabilizes one strand of the AT-rich DNA unwinding element (DUE), permitting loading of DNA polymerase. After initiation quickly degrades to an ADP-DnaA complex that is not apt for DNA replication. Binds acidic phospholipids. This Exiguobacterium sp. (strain ATCC BAA-1283 / AT1b) protein is Chromosomal replication initiator protein DnaA.